A 491-amino-acid chain; its full sequence is MDFLGLPTILLLVCISCLLIAAWRSTSQRGKEPPGPTPIPIIGNVFQLNPWDLMGSFKELSKKYGPIFTIHLGPKKIVVLYGYDIVKEALIDNGEAFSGRGILPLIEKLFKGTGIVTSNGETWRQLRRFALTTLRDFGMGKKGIEERIQEEAHFLVERIRKTHEEPFNPGKFLIHAVANIICSIVFGDRFDYEDKKFLDLIEMLEENNKYQNRIQTLLYNFFPTILDSLPGPHKTLIKNTETVDDFIKEIVIAHQESFDASCPRDFIDAFINKMEQEKENSYFTVESLTRTTLDLFLAGTGTTSTTLRYGLLILLKHPEIEEKMHKEIDRVVGRDRSPCMADRSQLPYTDAVIHEIQRFIDFLPLNVPHAVIKDTKLRDYFIPKDTMIFPLLSPILQDCKEFPNPEKFDPGHFLNANGTFRRSDYFMPFSAGKRICAGEGLARMEIFLFLTSILQNFSLKPVKDRKDIDISPIITSLANMPRPYEVSFIPR.

C436 is a heme binding site.

It belongs to the cytochrome P450 family. Heme serves as cofactor. As to expression, expressed in liver.

The protein resides in the endoplasmic reticulum membrane. It localises to the microsome membrane. The enzyme catalyses an organic molecule + reduced [NADPH--hemoprotein reductase] + O2 = an alcohol + oxidized [NADPH--hemoprotein reductase] + H2O + H(+). Its function is as follows. Cytochromes P450 are a group of heme-thiolate monooxygenases. In liver microsomes, this enzyme is involved in an NADPH-dependent electron transport pathway. It oxidizes a variety of structurally unrelated compounds, including steroids, fatty acids, and xenobiotics. This Gallus gallus (Chicken) protein is Cytochrome P450 2H1 (CYP2H1).